The sequence spans 101 residues: Small ribosomal subunit protein bS18c (101 aa).

Basic residues predominate over residues 1-19 (MDKSKRPFRKSKRSFRRRL). 2 disordered regions span residues 1–23 (MDKS…PPIG) and 82–101 (KQFE…TRNK).

The protein belongs to the bacterial ribosomal protein bS18 family. Part of the 30S ribosomal subunit.

The protein resides in the plastid. The protein localises to the chloroplast. The polypeptide is Small ribosomal subunit protein bS18c (Drimys granadensis).